The primary structure comprises 148 residues: Aspartate carbamoyltransferase regulatory chain (148 aa).

Zn(2+) is bound by residues C106, C111, C134, and C137.

It belongs to the PyrI family. In terms of assembly, contains catalytic and regulatory chains. Zn(2+) is required as a cofactor.

Functionally, involved in allosteric regulation of aspartate carbamoyltransferase. In Methanococcus maripaludis (strain C5 / ATCC BAA-1333), this protein is Aspartate carbamoyltransferase regulatory chain.